A 695-amino-acid chain; its full sequence is MSKDLSKVRNIGISAHIDSGKTTLTERILFYTDRIHAIHEVRGKDGVGAKMDSMELEKERGITIQSAATFCNWKGTDINIIDTPGHVDFTVEVERALRVLDGAVLVLCSVGGVQSQSITVNRQMTRYNVPRIAFINKCDRTGANPAKVTGQLQEKLQLNAHMMQMPIGLEGDLVGMVDLVTMKAVYYEGENGDEIRITDIPAEMLDEATEKRETLLEEISMFSEELMEALLEDSENVDIDLIYKAVRQGTIALEFTPVFMGSAYKNKGVQALLDAVETYLPCPTDVENIGLDLDNEETEFAVTNNDEDPLIMLAFKLEDGRYGQLTYVRTYQGQLTKGDTVYNRRTGRKVKIGRLCRMHSDEMEEIDGVGSGDIVALFGVDCASGDTFTNDAVNCSMTSMHVPEPVISLSIKPIDNKAQINMSKALNRFTKEDPTFRTFVDHETNETIISGMGELHLEVYVERMKREYAAEVEVGKPQVSYRETITQRAEFNYTHKKQTGGTGQFGRVAGYMEPLDEGDYEFVDKIVGGAIPREFISSCDKGFQKSLVKGHLCGAGITGVRCVINDGSFHAVDSSDVAFQIASVGAFKDGYMKAKPVIMEPIMKVSVEGPSEFQGAVMGSINQRRGMIIGSNEEGTYSVIEAEVPLSEMFGYSTTLRSLTQGKAEFTMEFANFKPVPKTVGDNLIKAHEEERKNG.

Positions 6–284 constitute a tr-type G domain; it reads SKVRNIGISA…AVETYLPCPT (279 aa). GTP-binding positions include 15-22, 82-86, and 136-139; these read AHIDSGKT, DTPGH, and NKCD.

Belongs to the TRAFAC class translation factor GTPase superfamily. Classic translation factor GTPase family. EF-G/EF-2 subfamily.

It is found in the cytoplasm. Its function is as follows. Catalyzes the GTP-dependent ribosomal translocation step during translation elongation. During this step, the ribosome changes from the pre-translocational (PRE) to the post-translocational (POST) state as the newly formed A-site-bound peptidyl-tRNA and P-site-bound deacylated tRNA move to the P and E sites, respectively. Catalyzes the coordinated movement of the two tRNA molecules, the mRNA and conformational changes in the ribosome. This Desulfotalea psychrophila (strain LSv54 / DSM 12343) protein is Elongation factor G 1.